The chain runs to 2552 residues: Protein TIC 214 (2552 aa).

6 consecutive transmembrane segments (helical) span residues 15–35, 54–74, 78–98, 119–136, 154–174, and 243–263; these read LIFG…SYLF, LSYG…YLPF, LSNF…QFFW, TLAF…YTFF, FKIL…LICI, and ILAT…PIPF. The segment at 304-325 is disordered; that stretch reads EEQKKDEKSADEEKKRAVEEEN. The span at 305 to 322 shows a compositional bias: basic and acidic residues; it reads EQKKDEKSADEEKKRAVE. The next 3 membrane-spanning stretches (helical) occupy residues 362 to 382, 423 to 443, and 452 to 472; these read TLYT…AFLF, PFLV…SVYI, and FLFN…HFFF. The segment at 2045 to 2077 is disordered; that stretch reads MKAEEQKKIDEEYEEKKEKRKKEQEEQGKAFDE. The stretch at 2416–2511 forms a coiled coil; that stretch reads RRRRQLRIVN…IKKKLMRLRF (96 aa).

It belongs to the TIC214 family. Part of the Tic complex.

It is found in the plastid. Its subcellular location is the chloroplast inner membrane. Involved in protein precursor import into chloroplasts. May be part of an intermediate translocation complex acting as a protein-conducting channel at the inner envelope. This Pelargonium hortorum (Common geranium) protein is Protein TIC 214.